The chain runs to 906 residues: ATP-dependent DNA helicase PIF1 (906 aa).

Disordered stretches follow at residues 77–146 (DSEI…SSTF) and 229–297 (LEGS…PFKV). Positions 78–87 (SEIKESDDLS) are enriched in basic and acidic residues. Residues 88-119 (KGQSHVYNGSPVTKNSILQIEKQQIQKSPRPT) show a composition bias toward polar residues. Positions 120–132 (ETNKRMQIRKDPD) are enriched in basic and acidic residues. The span at 234–261 (NKVQADNASPFRITSSFSSPSQIQNQGV) shows a compositional bias: polar residues. Residues 273–291 (QNVSSASQSSSPPMTVSQV) show a composition bias toward low complexity. 390–397 (GSAGTGKS) contacts ATP. Residues 840-859 (QAYVALSRAVSRAGLQVLNF) mediate DNA binding.

The protein belongs to the helicase family. PIF1 subfamily. In terms of assembly, monomer. Interacts with telomerase. It depends on Mg(2+) as a cofactor.

Its subcellular location is the nucleus. It localises to the mitochondrion. The catalysed reaction is Couples ATP hydrolysis with the unwinding of duplex DNA at the replication fork by translocating in the 5'-3' direction. This creates two antiparallel DNA single strands (ssDNA). The leading ssDNA polymer is the template for DNA polymerase III holoenzyme which synthesizes a continuous strand.. It carries out the reaction ATP + H2O = ADP + phosphate + H(+). Its function is as follows. DNA-dependent ATPase and 5'-3' DNA helicase required for the maintenance of both mitochondrial and nuclear genome stability. Efficiently unwinds G-quadruplex (G4) DNA structures and forked RNA-DNA hybrids. Resolves G4 structures, preventing replication pausing and double-strand breaks (DSBs) at G4 motifs. Involved in the maintenance of telomeric DNA. Inhibits telomere elongation, de novo telomere formation and telomere addition to DSBs via catalytic inhibition of telomerase. Reduces the processivity of telomerase by displacing active telomerase from DNA ends. Releases telomerase by unwinding the short telomerase RNA/telomeric DNA hybrid that is the intermediate in the telomerase reaction. Involved in the maintenance of ribosomal (rDNA). Required for efficient fork arrest at the replication fork barrier within rDNA. Involved in the maintenance of mitochondrial (mtDNA). Required to maintain mtDNA under conditions that introduce dsDNA breaks in mtDNA, either preventing or repairing dsDNA breaks. May inhibit replication progression to allow time for repair. May have a general role in chromosomal replication by affecting Okazaki fragment maturation. May have a role in conjunction with DNA2 helicase/nuclease in 5'-flap extension during Okazaki fragment processing. This is ATP-dependent DNA helicase PIF1 from Candida albicans (strain SC5314 / ATCC MYA-2876) (Yeast).